Here is a 173-residue protein sequence, read N- to C-terminus: ATP-dependent protease subunit HslV (173 aa).

The active site involves Thr-2. Residues Gly-158, Asp-161, and Ser-164 each contribute to the Na(+) site.

The protein belongs to the peptidase T1B family. HslV subfamily. In terms of assembly, a double ring-shaped homohexamer of HslV is capped on each side by a ring-shaped HslU homohexamer. The assembly of the HslU/HslV complex is dependent on binding of ATP.

It is found in the cytoplasm. It carries out the reaction ATP-dependent cleavage of peptide bonds with broad specificity.. Allosterically activated by HslU binding. In terms of biological role, protease subunit of a proteasome-like degradation complex believed to be a general protein degrading machinery. In Glaesserella parasuis serovar 5 (strain SH0165) (Haemophilus parasuis), this protein is ATP-dependent protease subunit HslV.